The sequence spans 493 residues: Desmethylyatein synthase (493 aa).

The chain crosses the membrane as a helical span at residues M1–K21. C434 is a binding site for heme.

The protein belongs to the cytochrome P450 family. The cofactor is heme.

It is found in the membrane. It catalyses the reaction (-)-bursehernin + reduced [NADPH--hemoprotein reductase] + O2 = (-)-5'-demethylyatein + oxidized [NADPH--hemoprotein reductase] + H2O + H(+). It functions in the pathway aromatic compound metabolism; phenylpropanoid biosynthesis. Functionally, cytochrome P450 involved in the biosynthesis of etoposide, a chemotherapeutic compound of the topoisomerase inhibitor family. Catalyzes the conversion of bursehernin to demethylyatein. The sequence is that of Desmethylyatein synthase from Sinopodophyllum hexandrum (Himalayan may apple).